Reading from the N-terminus, the 763-residue chain is 5-methyltetrahydropteroyltriglutamate--homocysteine methyltransferase (763 aa).

Residues 16 to 19 (RELK) and lysine 117 contribute to the 5-methyltetrahydropteroyltri-L-glutamate site. L-homocysteine-binding positions include 440-442 (IGS) and glutamate 493. L-methionine is bound by residues 440-442 (IGS) and glutamate 493. 5-methyltetrahydropteroyltri-L-glutamate-binding positions include 524–525 (RC) and tryptophan 570. Aspartate 608 serves as a coordination point for L-homocysteine. Aspartate 608 lines the L-methionine pocket. Glutamate 614 contributes to the 5-methyltetrahydropteroyltri-L-glutamate binding site. Positions 650, 652, and 674 each coordinate Zn(2+). Histidine 703 serves as the catalytic Proton donor. Residue cysteine 735 coordinates Zn(2+).

It belongs to the vitamin-B12 independent methionine synthase family. Zn(2+) is required as a cofactor.

It catalyses the reaction 5-methyltetrahydropteroyltri-L-glutamate + L-homocysteine = tetrahydropteroyltri-L-glutamate + L-methionine. Its pathway is amino-acid biosynthesis; L-methionine biosynthesis via de novo pathway; L-methionine from L-homocysteine (MetE route): step 1/1. Catalyzes the transfer of a methyl group from 5-methyltetrahydrofolate to homocysteine resulting in methionine formation. This chain is 5-methyltetrahydropteroyltriglutamate--homocysteine methyltransferase, found in Alcanivorax borkumensis (strain ATCC 700651 / DSM 11573 / NCIMB 13689 / SK2).